The chain runs to 424 residues: Histidine--tRNA ligase (424 aa).

The protein belongs to the class-II aminoacyl-tRNA synthetase family. As to quaternary structure, homodimer.

The protein resides in the cytoplasm. It carries out the reaction tRNA(His) + L-histidine + ATP = L-histidyl-tRNA(His) + AMP + diphosphate + H(+). This Marinomonas sp. (strain MWYL1) protein is Histidine--tRNA ligase.